A 437-amino-acid chain; its full sequence is Amino-acid acetyltransferase (437 aa).

One can recognise an N-acetyltransferase domain in the interval Glu289 to Lys429.

The protein belongs to the acetyltransferase family. ArgA subfamily.

It is found in the cytoplasm. It catalyses the reaction L-glutamate + acetyl-CoA = N-acetyl-L-glutamate + CoA + H(+). The protein operates within amino-acid biosynthesis; L-arginine biosynthesis; N(2)-acetyl-L-ornithine from L-glutamate: step 1/4. The sequence is that of Amino-acid acetyltransferase from Actinobacillus pleuropneumoniae serotype 3 (strain JL03).